We begin with the raw amino-acid sequence, 288 residues long: Bifunctional protein FolD (288 aa).

NADP(+) is bound by residues glycine 166–serine 168 and isoleucine 232.

This sequence belongs to the tetrahydrofolate dehydrogenase/cyclohydrolase family. As to quaternary structure, homodimer.

It catalyses the reaction (6R)-5,10-methylene-5,6,7,8-tetrahydrofolate + NADP(+) = (6R)-5,10-methenyltetrahydrofolate + NADPH. The enzyme catalyses (6R)-5,10-methenyltetrahydrofolate + H2O = (6R)-10-formyltetrahydrofolate + H(+). It participates in one-carbon metabolism; tetrahydrofolate interconversion. In terms of biological role, catalyzes the oxidation of 5,10-methylenetetrahydrofolate to 5,10-methenyltetrahydrofolate and then the hydrolysis of 5,10-methenyltetrahydrofolate to 10-formyltetrahydrofolate. The protein is Bifunctional protein FolD of Salmonella enteritidis PT4 (strain P125109).